Consider the following 313-residue polypeptide: MNEYIGQGNIKKRLGLAIKASKIRKEALDHVLLVGPPGLGKTTLAHIISNELGTNIHVTSGPILEKQGDVAAILTNLEHGDVLFIDEIHRMNRSVEEILYTAMEDFQIDILIGKGPSARSIRIDLQPFTLVGATTRSGLLSAPLRNRFGLIMELDFYSIDELSKIIERAAIVLNVEIEKDAAILLAKRSRGTPRIALRLLRRVRDMSTIRGKVKIDIYMVEEIMFLLGIDKEGLDELDRKILRTIIEVYNGGPVGVKSLAASVGISEDSISEVYEPYLLQSGFIARTHRGRIATKKAYNHLGIKVQRGLFDEE.

Residues 1-157 (MNEYIGQGNI…FGLIMELDFY (157 aa)) form a large ATPase domain (RuvB-L) region. Residues glycine 38, lysine 41, threonine 42, threonine 43, 104 to 106 (EDF), arginine 147, tyrosine 157, and arginine 194 each bind ATP. Threonine 42 provides a ligand contact to Mg(2+). The tract at residues 158-228 (SIDELSKIIE…MVEEIMFLLG (71 aa)) is small ATPAse domain (RuvB-S). Residues 231-313 (KEGLDELDRK…KVQRGLFDEE (83 aa)) are head domain (RuvB-H). Residues arginine 286 and arginine 291 each contribute to the DNA site.

Belongs to the RuvB family. Homohexamer. Forms an RuvA(8)-RuvB(12)-Holliday junction (HJ) complex. HJ DNA is sandwiched between 2 RuvA tetramers; dsDNA enters through RuvA and exits via RuvB. An RuvB hexamer assembles on each DNA strand where it exits the tetramer. Each RuvB hexamer is contacted by two RuvA subunits (via domain III) on 2 adjacent RuvB subunits; this complex drives branch migration. In the full resolvosome a probable DNA-RuvA(4)-RuvB(12)-RuvC(2) complex forms which resolves the HJ.

It is found in the cytoplasm. The catalysed reaction is ATP + H2O = ADP + phosphate + H(+). Its function is as follows. The RuvA-RuvB-RuvC complex processes Holliday junction (HJ) DNA during genetic recombination and DNA repair, while the RuvA-RuvB complex plays an important role in the rescue of blocked DNA replication forks via replication fork reversal (RFR). RuvA specifically binds to HJ cruciform DNA, conferring on it an open structure. The RuvB hexamer acts as an ATP-dependent pump, pulling dsDNA into and through the RuvAB complex. RuvB forms 2 homohexamers on either side of HJ DNA bound by 1 or 2 RuvA tetramers; 4 subunits per hexamer contact DNA at a time. Coordinated motions by a converter formed by DNA-disengaged RuvB subunits stimulates ATP hydrolysis and nucleotide exchange. Immobilization of the converter enables RuvB to convert the ATP-contained energy into a lever motion, pulling 2 nucleotides of DNA out of the RuvA tetramer per ATP hydrolyzed, thus driving DNA branch migration. The RuvB motors rotate together with the DNA substrate, which together with the progressing nucleotide cycle form the mechanistic basis for DNA recombination by continuous HJ branch migration. Branch migration allows RuvC to scan DNA until it finds its consensus sequence, where it cleaves and resolves cruciform DNA. This chain is Holliday junction branch migration complex subunit RuvB, found in Thermosipho melanesiensis (strain DSM 12029 / CIP 104789 / BI429).